A 317-amino-acid polypeptide reads, in one-letter code: Olfactory receptor 1B1 (317 aa).

Topologically, residues Met1 to Phe29 are extracellular. N-linked (GlcNAc...) asparagine glycans are attached at residues Asn6 and Asn22. A helical membrane pass occupies residues Phe30–Ile50. Residues Ser51–Gly66 lie on the Cytoplasmic side of the membrane. Residues Leu67 to Val87 traverse the membrane as a helical segment. Residues Ser88–Cys98 are Extracellular-facing. Cys98 and Cys184 are joined by a disulfide. A helical membrane pass occupies residues Leu99 to Met119. Topologically, residues Ala120–Cys144 are cytoplasmic. Residues Leu145–Leu165 form a helical membrane-spanning segment. The Extracellular segment spans residues Pro166–Glu201. The helical transmembrane segment at Leu202–Ser222 threads the bilayer. The Cytoplasmic portion of the chain corresponds to Tyr223–Ser248. Residues His249–Phe269 traverse the membrane as a helical segment. Over Gln270 to Asp276 the chain is Extracellular. A helical membrane pass occupies residues Met277 to Leu297. Over His298–Pro317 the chain is Cytoplasmic.

Belongs to the G-protein coupled receptor 1 family.

It is found in the cell membrane. Odorant receptor. This is Olfactory receptor 1B1 (OR1B1) from Homo sapiens (Human).